The primary structure comprises 173 residues: Alpha-crystallin A chain (173 aa).

M1 bears the N-acetylmethionine mark. Residues 1 to 63 form a required for complex formation with BFSP1 and BFSP2 region; sequence MDIAIQHPWF…RTVLDSGISE (63 aa). Residue Q6 is modified to Deamidated glutamine; partial. A Phosphoserine modification is found at S45. Q50 bears the Deamidated glutamine; partial mark. Positions 52 to 162 constitute a sHSP domain; sequence LFRTVLDSGI…GHSERAIPVS (111 aa). The residue at position 70 (K70) is an N6-acetyllysine. Q90 bears the Deamidated glutamine; partial mark. K99 carries the N6-acetyllysine modification. H100 is a Zn(2+) binding site. N101 is subject to Deamidated asparagine; partial. The Zn(2+) site is built by E102 and H107. Residue S122 is modified to Phosphoserine. N123 bears the Deamidated asparagine; partial mark. The tract at residues 144 to 173 is disordered; that stretch reads PKIPSGVDAGHSERAIPVSREEKPSSAPSS. A compositionally biased stretch (basic and acidic residues) spans 153 to 167; it reads GHSERAIPVSREEKP. H154 is a Zn(2+) binding site. O-linked (GlcNAc) serine glycosylation occurs at S162.

The protein belongs to the small heat shock protein (HSP20) family. In terms of assembly, heteromer composed of three CRYAA and one CRYAB subunits. Inter-subunit bridging via zinc ions enhances stability, which is crucial as there is no protein turn over in the lens. Can also form homodimers and homotetramers (dimers of dimers) which serve as the building blocks of homooligomers. Within homooligomers, the zinc-binding motif is created from residues of 3 different molecules. His-100 and Glu-102 from one molecule are ligands of the zinc ion, and His-107 and His-154 residues from additional molecules complete the site with tetrahedral coordination geometry. Part of a complex required for lens intermediate filament formation composed of BFSP1, BFSP2 and CRYAA. In terms of processing, acetylation at Lys-70 may increase chaperone activity. Post-translationally, undergoes age-dependent proteolytical cleavage at the C-terminus.

It localises to the cytoplasm. Its subcellular location is the nucleus. In terms of biological role, contributes to the transparency and refractive index of the lens. Acts as a chaperone, preventing aggregation of various proteins under a wide range of stress conditions. Required for the correct formation of lens intermediate filaments as part of a complex composed of BFSP1, BFSP2 and CRYAA. The sequence is that of Alpha-crystallin A chain (CRYAA) from Giraffa camelopardalis (Giraffe).